A 456-amino-acid chain; its full sequence is Ribosome assembly protein METTL17, mitochondrial (456 aa).

The N-terminal 19 residues, Met1–Gly19, are a transit peptide targeting the mitochondrion. Cys333, Cys339, Cys347, and Cys404 together coordinate [4Fe-4S] cluster.

This sequence belongs to the methyltransferase superfamily. Rsm22 family. As to quaternary structure, associates with the mitochondrial ribosome (mitoribosome).

It is found in the mitochondrion matrix. In terms of biological role, mitochondrial ribosome (mitoribosome) assembly factor. Binds at the interface of the head and body domains of the mitochondrial small ribosomal subunit (mt-SSU), occluding the mRNA channel and preventing compaction of the head domain towards the body. Probable inactive methyltransferase: retains the characteristic folding and ability to bind S-adenosyl-L-methionine, but it probably lost its methyltransferase activity. This is Ribosome assembly protein METTL17, mitochondrial from Homo sapiens (Human).